The chain runs to 237 residues: DNA replication inhibitor toxin SocB (237 aa).

Interacts with cognate antitoxin SocA and with beta sliding clamp (dnaN). In terms of processing, degraded by ClpXP, recognition of SocB by ClpX requires SocA.

The protein resides in the cytoplasm. Its function is as follows. Toxic component of an atypical type II toxin-antitoxin (TA) system. Upon overexpression in the absence of its cognate antitoxin SocA, leads to inhibition of colony formation, cellular filamentation, incomplete DNA replication and induction of the SOS response. Exercises toxicity by binding the beta sliding clamp (dnaN), blocking DNA replication and leading to premature replication fork collapse and incomplete cell division. Unlike most type II TA systems, the SocB toxin is unstable and targeted by its cognate antitoxin SocA for degradation by ClpXP. Not toxic upon expression in E.coli. The protein is DNA replication inhibitor toxin SocB of Caulobacter vibrioides (strain NA1000 / CB15N) (Caulobacter crescentus).